The sequence spans 427 residues: Trigger factor (427 aa).

Residues 163–248 (GDTVVIDFEG…VHEVKAKELP (86 aa)) form the PPIase FKBP-type domain.

It belongs to the FKBP-type PPIase family. Tig subfamily.

It localises to the cytoplasm. The catalysed reaction is [protein]-peptidylproline (omega=180) = [protein]-peptidylproline (omega=0). In terms of biological role, involved in protein export. Acts as a chaperone by maintaining the newly synthesized protein in an open conformation. Functions as a peptidyl-prolyl cis-trans isomerase. The sequence is that of Trigger factor from Enterococcus faecalis (strain ATCC 700802 / V583).